The following is a 202-amino-acid chain: MSRYRGPRVKIIRRLGALPGLTSKTLKSKSNYIDRSTPNKKVSQYRIRLEEKQKLRSHYGLAERQLLKYMRIARKAKGSTGQILLQLLEMRLDNTIFRLGMSPTIPGARQLVNHRHISINNDVVDIPSYNCEPGDIITIGNKQKSRFIITKNINSFQRLKIPSHLIFDSTQLRGSVNQMINREWINLKINELLVVEYYSRQV.

One can recognise an S4 RNA-binding domain in the interval 90-151; that stretch reads MRLDNTIFRL…KQKSRFIITK (62 aa).

It belongs to the universal ribosomal protein uS4 family. Part of the 30S ribosomal subunit. Contacts protein S5. The interaction surface between S4 and S5 is involved in control of translational fidelity.

The protein localises to the plastid. It is found in the chloroplast. In terms of biological role, one of the primary rRNA binding proteins, it binds directly to 16S rRNA where it nucleates assembly of the body of the 30S subunit. Its function is as follows. With S5 and S12 plays an important role in translational accuracy. This is Small ribosomal subunit protein uS4c (rps4) from Plagiochila adianthoides (Liverwort).